We begin with the raw amino-acid sequence, 168 residues long: SsrA-binding protein (168 aa).

This sequence belongs to the SmpB family.

It is found in the cytoplasm. Functionally, required for rescue of stalled ribosomes mediated by trans-translation. Binds to transfer-messenger RNA (tmRNA), required for stable association of tmRNA with ribosomes. tmRNA and SmpB together mimic tRNA shape, replacing the anticodon stem-loop with SmpB. tmRNA is encoded by the ssrA gene; the 2 termini fold to resemble tRNA(Ala) and it encodes a 'tag peptide', a short internal open reading frame. During trans-translation Ala-aminoacylated tmRNA acts like a tRNA, entering the A-site of stalled ribosomes, displacing the stalled mRNA. The ribosome then switches to translate the ORF on the tmRNA; the nascent peptide is terminated with the 'tag peptide' encoded by the tmRNA and targeted for degradation. The ribosome is freed to recommence translation, which seems to be the essential function of trans-translation. This Mycobacterium sp. (strain JLS) protein is SsrA-binding protein.